A 283-amino-acid chain; its full sequence is Urease accessory protein UreD (283 aa).

This sequence belongs to the UreD family. As to quaternary structure, ureD, UreF and UreG form a complex that acts as a GTP-hydrolysis-dependent molecular chaperone, activating the urease apoprotein by helping to assemble the nickel containing metallocenter of UreC. The UreE protein probably delivers the nickel.

The protein localises to the cytoplasm. In terms of biological role, required for maturation of urease via the functional incorporation of the urease nickel metallocenter. This chain is Urease accessory protein UreD, found in Acaryochloris marina (strain MBIC 11017).